The primary structure comprises 182 residues: Interferon beta (182 aa).

The N-terminal stretch at 1-21 is a signal peptide; the sequence is MNNRWILHAAFLLCFSTTALS. Tyrosine 24 is modified (phosphotyrosine). Residues asparagine 50, asparagine 90, and asparagine 97 are each glycosylated (N-linked (GlcNAc...) asparagine).

Belongs to the alpha/beta interferon family. In terms of assembly, monomer. Post-translationally, this beta interferon does not have a disulfide bond.

The protein resides in the secreted. Type I interferon cytokine that plays a key role in the innate immune response to infection, developing tumors and other inflammatory stimuli. Signals via binding to high-affinity (IFNAR2) and low-affinity (IFNAR1) heterodimeric receptor, activating the canonical Jak-STAT signaling pathway resulting in transcriptional activation or repression of interferon-regulated genes that encode the effectors of the interferon response, such as antiviral proteins, regulators of cell proliferation and differentiation, and immunoregulatory proteins. Signals mostly via binding to a IFNAR1-IFNAR2 heterodimeric receptor, but can also function with IFNAR1 alone and independently of Jak-STAT pathways. Elicits a wide variety of responses, including antiviral and antibacterial activities, and can regulate the development of B-cells, myelopoiesis and lipopolysaccharide (LPS)-inducible production of tumor necrosis factor. Plays a role in neuronal homeostasis by regulating dopamine turnover and protecting dopaminergic neurons: acts by promoting neuronal autophagy and alpha-synuclein clearance, thereby preventing dopaminergic neuron loss. IFNB1 is more potent than interferon-alpha (IFN-alpha) in inducing the apoptotic and antiproliferative pathways required for control of tumor cell growth. The protein is Interferon beta of Mus musculus (Mouse).